The primary structure comprises 134 residues: Transcriptional activator protein (134 aa).

The Nuclear localization signal motif lies at 17 to 31 (KVQHRIAKKTTRRRR). A zinc finger spans residues 36–53 (CGCSYFVALGCHNHGFTH). A disordered region spans residues 73–103 (KSPVFQDNQTPRETISEEPRHNHNTSPIQLQ). Positions 75 to 85 (PVFQDNQTPRE) are enriched in polar residues. The tract at residues 119–134 (NLDSFTSSDLAFLKSI) is transactivation.

The protein belongs to the geminiviridae transcriptional activator protein family. As to quaternary structure, monomer. Homodimer. Homooligomer. Self-interaction correlates with nuclear localization and efficient activation of transcription. Monomers suppress local silencing by interacting with and inactivating host adenosine kinase 2 (ADK2) in the cytoplasm. Interacts with and inhibits host SNF1 kinase. Binds to ssDNA. May interact with host RPS27A. Post-translationally, phosphorylated.

The protein localises to the host nucleus. It localises to the host cytoplasm. Functionally, multifunctional protein that modulates host antiviral defenses and promotes host attractiveness to insect vectors. Acts as a suppressor of RNA-mediated gene silencing, also known as post-transcriptional gene silencing (PTGS), a mechanism of plant viral defense that limits the accumulation of viral RNAs. TrAP suppresses the host RNA silencing by inhibiting adenosine kinase 2 (ADK2), a kinase involved in a general methylation pathway. Also suppresses the host basal defense by interacting with and inhibiting SNF1 kinase, a key regulator of cell metabolism implicated in innate antiviral defense. Its function is as follows. Inhibits signal transduction by the phytohormone jasmonate, making the infected plant more attractive to aphids, which are the second host to play a role as a dissemination vector. Acts by binding to ubiquitin precursor RPS27A, thereby preventing ubiquitin degradation of JAZ. This chain is Transcriptional activator protein, found in Tomato yellow leaf curl China virus (TYLCCNV).